Consider the following 673-residue polypeptide: MPLPEPSEQDCESLRAGQEPSVGARKPQESSNLVPARDKERPKPTDVASQETSSTATLPNNTLQVAPVKKQGRIIHRKRSRVDAVPPQPLEFLKTPFGGRLLVHKSFLYKQEKAVGDKVYWKCRQHSELSCRGRAITRGFRVTEMRDHCHPPEKEGLDRKKRHRGRPPSSALPEGAEVQEDEVSLWLYPVEPEPTPQPSIETPEEEQGYRSLALQSLPPKKRPTPGVVRYRPLEFLKTCYGGTFLVHQSFLYKREKTVGGKVYWTCREHAVHGCRSRAITQGQRVTVMRSHCHSPDIEGLQARRQQEKTIKKIQARRIGAGDLEDCDDIEDSLLQGVDSLFYRRGQGTLTLSRSKSKSKSKSRSKSKSKSRSRSRKRAKKQQESSQEPPEEDQDVDPRGPEFLKTPLGGNFLVYESFLYRREKVAGEKVYWTCRDQARMGCRSRAITQGRQVTVMRSHCHPPDLLGLETLRQREKRPGPSQWDGPEGPEFLKTPLGGSFLVYESFLYRREKATGDKVYWTCRDQARMGCRSRAITQGQRVMVMRRHCHPPDMGGLEALRQRENFPNLTHWEGPEPLQPLEFLRTSLGGRFLVYESFLYRKEKAAGEKVYWMCRDQARLGCRSRAITQGRRVMVMRSHCHPPDLAGLEALRQREKAPSAAKKKKKKKKKKKGIH.

Residues 1-62 are disordered; sequence MPLPEPSEQD…SSTATLPNNT (62 aa). S21 carries the phosphoserine modification. A compositionally biased stretch (polar residues) spans 47–62; sequence VASQETSSTATLPNNT. 2 FLYWCH-type zinc fingers span residues 92–150 and 235–293; these read FLKT…DHCH and FLKT…SHCH. K110 is covalently cross-linked (Glycyl lysine isopeptide (Lys-Gly) (interchain with G-Cter in SUMO2)). The span at 147–158 shows a compositional bias: basic and acidic residues; sequence DHCHPPEKEGLD. The interval 147-178 is disordered; that stretch reads DHCHPPEKEGLDRKKRHRGRPPSSALPEGAEV. Phosphoserine is present on residues S294 and S339. Residues 351–402 form a disordered region; the sequence is LSRSKSKSKSKSRSKSKSKSRSRSRKRAKKQQESSQEPPEEDQDVDPRGPEF. Over residues 354 to 379 the composition is skewed to basic residues; that stretch reads SKSKSKSKSRSKSKSKSRSRSRKRAK. 3 FLYWCH-type zinc fingers span residues 402 to 460, 490 to 548, and 581 to 639; these read FLKT…SHCH, FLKT…RHCH, and FLRT…SHCH. Positions 646-673 are disordered; that stretch reads LEALRQREKAPSAAKKKKKKKKKKKGIH. Over residues 659 to 673 the composition is skewed to basic residues; sequence AKKKKKKKKKKKGIH. K666 participates in a covalent cross-link: Glycyl lysine isopeptide (Lys-Gly) (interchain with G-Cter in SUMO2).

Interacts with CTNNB1 (when unphosphorylated), perhaps preventing interaction of CTNNB1 with TCF4, and thereby regulating transcription activation; phosphorylation of CTNNB1 may inhibit the interaction.

The protein resides in the nucleus. It is found in the chromosome. It localises to the centromere. Functionally, transcription cofactor. Negatively regulates transcription activation by catenin beta-1 CTNNB1, perhaps acting by competing with TCF4 for CTNNB1 binding. May play a role in DNA-damage response signaling. Binds specifically to DNA sequences at peri-centromeric chromatin loci. The sequence is that of FLYWCH-type zinc finger-containing protein 1 (Flywch1) from Mus musculus (Mouse).